A 474-amino-acid chain; its full sequence is 3-isopropylmalate dehydratase large subunit (474 aa).

The [4Fe-4S] cluster site is built by cysteine 353, cysteine 414, and cysteine 417.

Belongs to the aconitase/IPM isomerase family. LeuC type 1 subfamily. Heterodimer of LeuC and LeuD. [4Fe-4S] cluster serves as cofactor.

It carries out the reaction (2R,3S)-3-isopropylmalate = (2S)-2-isopropylmalate. It participates in amino-acid biosynthesis; L-leucine biosynthesis; L-leucine from 3-methyl-2-oxobutanoate: step 2/4. Its function is as follows. Catalyzes the isomerization between 2-isopropylmalate and 3-isopropylmalate, via the formation of 2-isopropylmaleate. The sequence is that of 3-isopropylmalate dehydratase large subunit from Pseudomonas aeruginosa (strain LESB58).